Consider the following 314-residue polypeptide: Malate dehydrogenase (314 aa).

NAD(+)-binding positions include 11–16 (GSGNIG) and D35. The substrate site is built by R84 and R90. NAD(+) contacts are provided by residues N97 and 120 to 122 (ITN). N122 and R153 together coordinate substrate. Catalysis depends on H177, which acts as the Proton acceptor.

It belongs to the LDH/MDH superfamily. MDH type 3 family.

It carries out the reaction (S)-malate + NAD(+) = oxaloacetate + NADH + H(+). Functionally, catalyzes the reversible oxidation of malate to oxaloacetate. The sequence is that of Malate dehydrogenase from Rickettsia prowazekii (strain Madrid E).